A 433-amino-acid polypeptide reads, in one-letter code: Inositol hexakisphosphate kinase 1 (433 aa).

Residues 100-160 (ETVEQDDTPE…SPKVELHSHS (61 aa)) form a disordered region. Residues 113–123 (PRRKHSRRSLH) show a composition bias toward basic residues. Over residues 139-149 (SFETSESSQEA) the composition is skewed to polar residues. Over residues 150–160 (KSPKVELHSHS) the composition is skewed to basic and acidic residues. Residue serine 151 is modified to Phosphoserine. Substrate is bound at residue 220-228 (PCVLDLKMG). Positions 359–383 (EVPPPCGPSTSPSSTSLEAGPSSPP) are disordered.

The protein belongs to the inositol phosphokinase (IPK) family. Highly expressed in brain and testis. Detected at much lower levels in heart, kidney, liver, lung and spleen.

It is found in the cytoplasm. It localises to the nucleus. The catalysed reaction is 1D-myo-inositol hexakisphosphate + ATP = 5-diphospho-1D-myo-inositol 1,2,3,4,6-pentakisphosphate + ADP. The enzyme catalyses 1-diphospho-1D-myo-inositol 2,3,4,5,6-pentakisphosphate + ATP + H(+) = 1,5-bis(diphospho)-1D-myo-inositol 2,3,4,6-tetrakisphosphate + ADP. Functionally, converts inositol hexakisphosphate (InsP6) to diphosphoinositol pentakisphosphate (InsP7/PP-InsP5). Converts 1,3,4,5,6-pentakisphosphate (InsP5) to PP-InsP4. The sequence is that of Inositol hexakisphosphate kinase 1 (Ip6k1) from Mus musculus (Mouse).